A 982-amino-acid chain; its full sequence is Zinc finger and BTB domain-containing protein 4 (982 aa).

In terms of domain architecture, BTB spans 30-131 (CDVTLIAGDT…IYSARLALPG (102 aa)). Lysine 40 participates in a covalent cross-link: Glycyl lysine isopeptide (Lys-Gly) (interchain with G-Cter in SUMO2). Residues 71 to 103 (TGGSAPSPATTTAASSSSSSPPPASPHSSSPPR) form a disordered region. Residues 74-89 (SAPSPATTTAASSSSS) show a composition bias toward low complexity. Residues 165–324 (VPPAPTSMVT…CRYCEKVFAL (160 aa)) form an interaction with CBFA2T3 region. The C2H2-type 1; atypical zinc finger occupies 210–232 (FPCPRCGKSFIHPKRLQTHEAQC). The segment at 234–255 (RGSNTRGSAGLGPGVSGSGGPA) is disordered. Gly residues predominate over residues 242–255 (AGLGPGVSGSGGPA). C2H2-type zinc fingers lie at residues 285–307 (YVCAACERSYVTLSSLKRHSNVH), 313–335 (YPCRYCEKVFALAEYRTKHEVWH), and 341–364 (YQCIFCWDTFVTYYNLKTHQRAFH). Phosphoserine is present on serine 367. The disordered stretch occupies residues 404-578 (KTYSQGAPEA…QLQAPPPLCQ (175 aa)). A compositionally biased stretch (pro residues) spans 430–446 (SPQPLPPPAPEPGPPPS). Gly residues predominate over residues 467–477 (AAGGGPAGTGG). Low complexity-rich tracts occupy residues 478–488 (SQAASVITYTT) and 507–529 (ATPTSPASTAVSPATAAGPATAT). Lysine 548 participates in a covalent cross-link: Glycyl lysine isopeptide (Lys-Gly) (interchain with G-Cter in SUMO2). Over residues 552 to 565 (GLSGSGGSPTGTGR) the composition is skewed to gly residues. Lysine 590 participates in a covalent cross-link: Glycyl lysine isopeptide (Lys-Gly) (interchain with G-Cter in SUMO2). Over residues 591-600 (RRISETDLRP) the composition is skewed to basic and acidic residues. Disordered stretches follow at residues 591 to 700 (RRIS…ERRH), 715 to 738 (LRKHQEAHSGGSHTSRTGRRSSTR), 759 to 839 (QRHA…GGGS), and 854 to 880 (GGSREPSAGKGKPGNEGSLGASEGDRM). Positions 604-627 (SGEEVEESEEEEEEEEEEDQEEQE) are enriched in acidic residues. Residues 628–637 (ESKAGGEDQL) show a composition bias toward basic and acidic residues. 2 consecutive C2H2-type zinc fingers follow at residues 700–722 (HRCGDCAQAFATVRKLRKHQEAH) and 739–761 (FTCPHCAKVCKTAAALNRHGQRH). Phosphothreonine; by HIPK2 is present on residues threonine 769 and threonine 771. Over residues 799–820 (SSSSGEAGSGSAAAAEASESAS) the composition is skewed to low complexity. At threonine 953 the chain carries Phosphothreonine; by HIPK2.

Interacts with HIPK2. Interacts with CBFA2T3. Interacts with ZBTB38. Post-translationally, phosphorylated by HIPK2. This phosphorylation reduces stability and triggers ZBTB4 protein degradation in response to DNA damage. Expressed in adult and aged myogenic satellite cells.

It localises to the nucleus. Its subcellular location is the chromosome. Its function is as follows. Transcriptional repressor with bimodal DNA-binding specificity. Represses transcription in a methyl-CpG-dependent manner. Binds with a higher affinity to methylated CpG dinucleotides in the consensus sequence 5'-CGCG-3' but can also bind to the non-methylated consensus sequence 5'-CTGCNA-3' also known as the consensus kaiso binding site (KBS). Can also bind specifically to a single methyl-CpG pair and can bind hemimethylated DNA but with a lower affinity compared to methylated DNA. Plays a role in postnatal myogenesis, may be involved in the regulation of satellite cells self-renewal. The chain is Zinc finger and BTB domain-containing protein 4 (Zbtb4) from Mus musculus (Mouse).